Here is a 436-residue protein sequence, read N- to C-terminus: Eukaryotic translation initiation factor 4B (436 aa).

Positions A56–A98 are disordered. S65 and S71 each carry phosphoserine. The 83-residue stretch at Y101–P183 folds into the RRM domain. A disordered region spans residues R185–N406. One copy of the 1; approximate repeat lies at D190–P210. The segment at D190–F350 is 7 X approximate tandem repeats. 5 tandem repeats follow at residues D211–V232, D233–V258, D259–P284, D285–P310, and D311–L340. Positions P329–P338 are enriched in basic and acidic residues. One copy of the 7; truncated repeat lies at D341–F350. Composition is skewed to basic and acidic residues over residues T359–K376 and E397–N406.

Its function is as follows. Involved in translation initiation. May be the homolog of mammalian eIF4B and be part of an RNA helicase. STM1/TIF3 is a non-essential gene. In Saccharomyces cerevisiae (strain ATCC 204508 / S288c) (Baker's yeast), this protein is Eukaryotic translation initiation factor 4B (TIF3).